We begin with the raw amino-acid sequence, 61 residues long: Bactericidin B-5P (61 aa).

The first 22 residues, 1–22 (MNFSRVLFFVFACLSAFAMASA), serve as a signal peptide directing secretion. A propeptide spans 23 to 24 (AP) (removed by a dipeptidylpeptidase). The residue at position 60 (Gly60) is a Glycine amide.

This sequence belongs to the cecropin family.

It localises to the secreted. Cecropins have lytic and antibacterial activity against several Gram-positive and Gram-negative bacteria. This chain is Bactericidin B-5P, found in Manduca sexta (Tobacco hawkmoth).